Consider the following 136-residue polypeptide: MTERTLVLIKPDGVQRQLVGEIIGRIERKGLTLVALELRHVSQDLAAQHYAEHEGKPFFASLLEFITSGPVVAAIVEGPRAIAAFRQLAGGTDPVEKAIPGTIRGDFGLETQFNLVHGSDSVESAKREIALWFPDA.

ATP contacts are provided by Lys10, Phe58, Arg86, Thr92, Arg104, and Asn114. The active-site Pros-phosphohistidine intermediate is His117.

Belongs to the NDK family. Homotetramer. The cofactor is Mg(2+).

The protein localises to the cytoplasm. It catalyses the reaction a 2'-deoxyribonucleoside 5'-diphosphate + ATP = a 2'-deoxyribonucleoside 5'-triphosphate + ADP. The enzyme catalyses a ribonucleoside 5'-diphosphate + ATP = a ribonucleoside 5'-triphosphate + ADP. Major role in the synthesis of nucleoside triphosphates other than ATP. The ATP gamma phosphate is transferred to the NDP beta phosphate via a ping-pong mechanism, using a phosphorylated active-site intermediate. This chain is Nucleoside diphosphate kinase, found in Mycobacterium avium (strain 104).